Reading from the N-terminus, the 220-residue chain is Probable GTP-binding protein EngB (220 aa).

The EngB-type G domain occupies 24-207 (PQPEVAFAGR…HELIESWIAP (184 aa)). Residues 32-39 (GRSNAGKS), 59-63 (GRTQH), 81-84 (DLPG), 148-151 (TKCD), and 185-188 (LFSA) each bind GTP. Residues S39 and T61 each coordinate Mg(2+).

The protein belongs to the TRAFAC class TrmE-Era-EngA-EngB-Septin-like GTPase superfamily. EngB GTPase family. It depends on Mg(2+) as a cofactor.

Necessary for normal cell division and for the maintenance of normal septation. This chain is Probable GTP-binding protein EngB, found in Paraburkholderia phymatum (strain DSM 17167 / CIP 108236 / LMG 21445 / STM815) (Burkholderia phymatum).